We begin with the raw amino-acid sequence, 244 residues long: UPF0173 metal-dependent hydrolase RoseRS_3945 (244 aa).

It belongs to the UPF0173 family.

In Roseiflexus sp. (strain RS-1), this protein is UPF0173 metal-dependent hydrolase RoseRS_3945.